Reading from the N-terminus, the 425-residue chain is Arogenate dehydratase 5, chloroplastic (425 aa).

A chloroplast-targeting transit peptide spans 1-38 (MQTISPAFSCDLKSVIQPNLTAKKARYSHVNGKRVSVR). In terms of domain architecture, Prephenate dehydratase spans 127–304 (RVAYQGVPGA…NVTRFLMLAR (178 aa)). Residues 320 to 411 (VFAAQEHKGT…SFLRVLGSYP (92 aa)) enclose the ACT domain.

In terms of tissue distribution, expressed in roots, leaves, stems, flowers and siliques. More abundant in stems and roots.

It is found in the plastid. Its subcellular location is the chloroplast stroma. The catalysed reaction is L-arogenate + H(+) = L-phenylalanine + CO2 + H2O. Its pathway is amino-acid biosynthesis; L-phenylalanine biosynthesis; L-phenylalanine from L-arogenate: step 1/1. Functionally, converts the prephenate produced from the shikimate-chorismate pathway into phenylalanine. The protein is Arogenate dehydratase 5, chloroplastic of Arabidopsis thaliana (Mouse-ear cress).